A 190-amino-acid polypeptide reads, in one-letter code: dTTP/UTP pyrophosphatase (190 aa).

Asp-71 acts as the Proton acceptor in catalysis.

The protein belongs to the Maf family. YhdE subfamily. A divalent metal cation is required as a cofactor.

The protein resides in the cytoplasm. The catalysed reaction is dTTP + H2O = dTMP + diphosphate + H(+). It catalyses the reaction UTP + H2O = UMP + diphosphate + H(+). Functionally, nucleoside triphosphate pyrophosphatase that hydrolyzes dTTP and UTP. May have a dual role in cell division arrest and in preventing the incorporation of modified nucleotides into cellular nucleic acids. The polypeptide is dTTP/UTP pyrophosphatase (Xanthomonas oryzae pv. oryzae (strain MAFF 311018)).